Consider the following 306-residue polypeptide: Recombination-associated protein RdgC (306 aa).

The protein belongs to the RdgC family.

The protein localises to the cytoplasm. It localises to the nucleoid. Its function is as follows. May be involved in recombination. This is Recombination-associated protein RdgC from Pseudomonas aeruginosa (strain LESB58).